Reading from the N-terminus, the 1692-residue chain is Regulating synaptic membrane exocytosis protein 1 (1692 aa).

Residues 1–26 (MSSAVGPRGPRPPTVPPPMQELPDLS) are disordered. Pro residues predominate over residues 9-20 (GPRPPTVPPPMQ). A RabBD domain is found at 22–182 (LPDLSHLTEE…TKSGAWFFGS (161 aa)). The segment at 110–170 (KDDAPTCGIC…VCNLCRKQQE (61 aa)) adopts an FYVE-type zinc-finger fold. Zn(2+)-binding residues include Cys116, Cys119, Cys132, Cys135, Cys140, Cys143, Cys162, and Cys165. Positions 183 to 199 (GPQQTSQDGTLSDTATG) are enriched in polar residues. Residues 183–555 (GPQQTSQDGT…CEDVELESES (373 aa)) are disordered. The segment covering 204-217 (VPREKKARLQERSR) has biased composition (basic and acidic residues). The segment covering 223-234 (STAAASSQDAAP) has biased composition (low complexity). A compositionally biased stretch (basic and acidic residues) spans 305–357 (VEERERKERRESRRLEKGRSQDYPDTPEKRDEGKAADEEKQRKEEDYQTRYRS). The span at 377-388 (MHARVSRARHER) shows a compositional bias: basic residues. The span at 412-430 (RAPAAARASPPDSPRAYSA) shows a compositional bias: low complexity. A compositionally biased stretch (basic and acidic residues) spans 462–475 (PELKAQEPLRKQSR). Over residues 497 to 509 (RNDSLSSDQSESV) the composition is skewed to polar residues. A Phosphoserine modification is found at Ser500. Basic residues predominate over residues 515–527 (KPHRSKRGGKKRQ). The span at 545–555 (SCEDVELESES) shows a compositional bias: acidic residues. Phosphoserine is present on Ser578. The PDZ domain maps to 605 to 691 (RTTMPKDSGA…EPQVEIIVSR (87 aa)). The interval 698 to 732 (RIPESSHPPLESSSSSFESQKMERPSISVISPTSP) is disordered. Positions 700 to 716 (PESSHPPLESSSSSFES) are enriched in low complexity. Phosphoserine occurs at positions 728 and 731. In terms of domain architecture, C2 1 spans 742–865 (LPGQLSVKLW…ALLDDEPHWY (124 aa)). The disordered stretch occupies residues 870–1013 (HDESSLPLPQ…RTRDVDSQYL (144 aa)). A Phosphoserine modification is found at Ser881. A compositionally biased stretch (polar residues) spans 935–944 (STTLTVPEQQ). Ser977 bears the Phosphoserine mark. The span at 992–1009 (RHHDASRSPVDHRTRDVD) shows a compositional bias: basic and acidic residues. The residue at position 1031 (Ser1031) is a Phosphoserine. Disordered regions lie at residues 1118–1222 (NCLR…EHSS) and 1235–1278 (GGSA…PVRS). Composition is skewed to basic and acidic residues over residues 1128–1144 (SPER…DRRR) and 1157–1170 (PEND…ERSS). Phosphoserine is present on Ser1252. Residues 1252 to 1265 (SPTQSPPADTSFSS) are compositionally biased toward polar residues. Thr1254 is modified (phosphothreonine). Residues Ser1256, Ser1308, Ser1310, Ser1311, Ser1339, Ser1340, and Ser1342 each carry the phosphoserine modification. 3 disordered regions span residues 1332-1394 (CDNV…SGRS), 1408-1428 (LEHN…AGGK), and 1445-1495 (RSRS…GSIN). The segment covering 1345 to 1366 (SDVSAISRTSSASRLSSTSFMS) has biased composition (low complexity). Residue Ser1416 is modified to Phosphoserine. Residues 1477-1490 (EMRKMVRQPSREST) are compositionally biased toward basic and acidic residues. The 119-residue stretch at 1538–1656 (AMGDIQIGME…DLSSMVIGWY (119 aa)) folds into the C2 2 domain. Phosphoserine is present on residues Ser1677, Ser1680, Ser1683, and Ser1692.

In terms of assembly, binds RAB3A, RAB3B and RAB3D that have been activated by GTP-binding. Interacts with RAB3C, RAB10, RAB26 and RAB37. Binds UNC13A. Interacts with TSPOAP1 and RIMBP2. Interacts with PPFIA3 and PPFIA4. Interacts with ERC1. Binds SNAP25, SYT1 and CACNA1B. Interaction with SYT1 is enhanced by calcium ions. Interaction with SNAP25 is weaker in the presence of calcium ions. In terms of processing, phosphorylated by BRSK1. Expressed in melanocytes. Detected in brain and retina.

The protein resides in the cell membrane. It localises to the synapse. It is found in the presynaptic cell membrane. Rab effector involved in exocytosis. May act as scaffold protein that regulates neurotransmitter release at the active zone. Essential for maintaining normal probability of neurotransmitter release and for regulating release during short-term synaptic plasticity. Plays a role in dendrite formation by melanocytes. The sequence is that of Regulating synaptic membrane exocytosis protein 1 (RIMS1) from Homo sapiens (Human).